Here is a 997-residue protein sequence, read N- to C-terminus: Protein Smaug (997 aa).

Residues Met-1 to Thr-37 are compositionally biased toward polar residues. Disordered stretches follow at residues Met-1–Pro-69 and Leu-329–Ser-370. Composition is skewed to low complexity over residues Thr-44 to Pro-69 and Leu-329 to Ser-338. Residues Ser-564 and Ser-575 each carry the phosphoserine modification. The tract at residues Glu-583–Met-763 is interaction with cup. An SAM domain is found at Gly-600–Lys-654. Disordered stretches follow at residues His-773–Met-892 and Gly-944–Glu-972. 2 stretches are compositionally biased toward polar residues: residues Asn-802–Leu-822 and His-854–Pro-864. At Ser-970 the chain carries Phosphoserine.

It belongs to the SMAUG family. Interacts with oskar (osk). Binds to the 3'-UTR of nos. Interacts with cup, which in turn recruits eIF4-E, leading to an indirect interaction between smg and eIF4-E that prevents mRNA translation.

Its subcellular location is the cytoplasm. Its function is as follows. Translation regulator that binds to the 3'-UTR of specific mRNAs such as nanos (nos) and prevent their translation. Prevents translation of unlocalized nos in the bulk cytoplasm via the recruitment of cup. This chain is Protein Smaug, found in Drosophila erecta (Fruit fly).